The primary structure comprises 203 residues: Outer-membrane lipoprotein carrier protein (203 aa).

The first 19 residues, 1 to 19 (MKKSIVVLFSAVLPFAVFA), serve as a signal peptide directing secretion.

It belongs to the LolA family. As to quaternary structure, monomer.

It is found in the periplasm. Participates in the translocation of lipoproteins from the inner membrane to the outer membrane. Only forms a complex with a lipoprotein if the residue after the N-terminal Cys is not an aspartate (The Asp acts as a targeting signal to indicate that the lipoprotein should stay in the inner membrane). The protein is Outer-membrane lipoprotein carrier protein of Shewanella amazonensis (strain ATCC BAA-1098 / SB2B).